A 136-amino-acid chain; its full sequence is Holo-[acyl-carrier-protein] synthase (136 aa).

Mg(2+) is bound by residues Asp8 and Glu57.

It belongs to the P-Pant transferase superfamily. AcpS family. Mg(2+) is required as a cofactor.

Its subcellular location is the cytoplasm. It carries out the reaction apo-[ACP] + CoA = holo-[ACP] + adenosine 3',5'-bisphosphate + H(+). Its function is as follows. Transfers the 4'-phosphopantetheine moiety from coenzyme A to a Ser of acyl-carrier-protein. In Methylorubrum extorquens (strain PA1) (Methylobacterium extorquens), this protein is Holo-[acyl-carrier-protein] synthase.